The sequence spans 354 residues: Protein RecA (354 aa).

ATP is bound at residue 65 to 72 (GPESSGKT).

It belongs to the RecA family.

It localises to the cytoplasm. In terms of biological role, can catalyze the hydrolysis of ATP in the presence of single-stranded DNA, the ATP-dependent uptake of single-stranded DNA by duplex DNA, and the ATP-dependent hybridization of homologous single-stranded DNAs. It interacts with LexA causing its activation and leading to its autocatalytic cleavage. This chain is Protein RecA, found in Pseudomonas savastanoi pv. phaseolicola (strain 1448A / Race 6) (Pseudomonas syringae pv. phaseolicola (strain 1448A / Race 6)).